Reading from the N-terminus, the 343-residue chain is Succinylglutamate desuccinylase (343 aa).

Zn(2+) contacts are provided by His-60, Glu-63, and His-157. Glu-221 is an active-site residue.

Belongs to the AspA/AstE family. Succinylglutamate desuccinylase subfamily. Zn(2+) is required as a cofactor.

It catalyses the reaction N-succinyl-L-glutamate + H2O = L-glutamate + succinate. The protein operates within amino-acid degradation; L-arginine degradation via AST pathway; L-glutamate and succinate from L-arginine: step 5/5. Functionally, transforms N(2)-succinylglutamate into succinate and glutamate. The polypeptide is Succinylglutamate desuccinylase (Idiomarina loihiensis (strain ATCC BAA-735 / DSM 15497 / L2-TR)).